A 293-amino-acid chain; its full sequence is 33 kDa chaperonin (293 aa).

2 cysteine pairs are disulfide-bonded: Cys-237–Cys-239 and Cys-271–Cys-274.

Belongs to the HSP33 family. Under oxidizing conditions two disulfide bonds are formed involving the reactive cysteines. Under reducing conditions zinc is bound to the reactive cysteines and the protein is inactive.

It localises to the cytoplasm. Its function is as follows. Redox regulated molecular chaperone. Protects both thermally unfolding and oxidatively damaged proteins from irreversible aggregation. Plays an important role in the bacterial defense system toward oxidative stress. In Haemophilus influenzae (strain 86-028NP), this protein is 33 kDa chaperonin.